A 126-amino-acid chain; its full sequence is MALKIRLARGGSKKRPYYQIVVADARSPRDGRFLEKVGSWNPMLAKDNPLRVELKADLIKEWIAKGAQPTDRVLRFLAEAGLAERAARSNPEKALPGKRALERVAEKKQKAEDAAAAAAAEASAAE.

The tract at residues 87-126 (ARSNPEKALPGKRALERVAEKKQKAEDAAAAAAAEASAAE) is disordered. The span at 99-113 (RALERVAEKKQKAED) shows a compositional bias: basic and acidic residues. Residues 114 to 126 (AAAAAAAEASAAE) are compositionally biased toward low complexity.

It belongs to the bacterial ribosomal protein bS16 family.

The polypeptide is Small ribosomal subunit protein bS16 (Agrobacterium fabrum (strain C58 / ATCC 33970) (Agrobacterium tumefaciens (strain C58))).